We begin with the raw amino-acid sequence, 1221 residues long: Deubiquitinating protein VCPIP1 (1221 aa).

A compositionally biased stretch (pro residues) spans 1 to 19; sequence MSQPPPPPPLPPPPPPPEA. Residues 1 to 40 form a disordered region; that stretch reads MSQPPPPPPLPPPPPPPEAPQTSSSLAAAATPGGLSKRRD. The OTU domain occupies 207 to 360; that stretch reads LIPVHVDGDG…RNHYIPLVGI (154 aa). The active site involves Asp-215. The active-site Nucleophile is the Cys-218. Residue His-353 is part of the active site. N6-acetyllysine is present on Lys-407. Disordered regions lie at residues 724–778 and 988–1009; these read SVMQ…KIRI and EATT…GSGG. Ser-746 and Ser-756 each carry phosphoserine. Residues 754–770 show a composition bias toward low complexity; sequence PSSAPATPTKAPYSPTT. Phosphothreonine is present on Thr-762. A phosphoserine mark is found at Ser-767, Ser-993, Ser-997, and Ser-1076. Disordered regions lie at residues 1117 to 1177 and 1189 to 1221; these read ASMD…TDSR and RSKA…MDHS. The span at 1143–1156 shows a compositional bias: polar residues; sequence VSSSVRPGNLQTGL. Low complexity predominate over residues 1162-1173; sequence LTGGTENLNTET. Ser-1197 and Ser-1206 each carry phosphoserine. The segment covering 1198-1208 has biased composition (acidic residues); the sequence is MEEPEEMDSQD. The span at 1209-1221 shows a compositional bias: polar residues; it reads AETTNTTEPMDHS.

As to quaternary structure, binds VCP and the ternary complex containing STX5A, NSFL1C and VCP. In terms of processing, phosphorylated at Ser-1206 by ATM or ATR following induction of covalent DNA-protein cross-links (DPCs). In terms of tissue distribution, widely expressed.

It localises to the nucleus. The protein localises to the cytoplasm. Its subcellular location is the endoplasmic reticulum. It is found in the golgi apparatus. The protein resides in the golgi stack. It catalyses the reaction Thiol-dependent hydrolysis of ester, thioester, amide, peptide and isopeptide bonds formed by the C-terminal Gly of ubiquitin (a 76-residue protein attached to proteins as an intracellular targeting signal).. Functionally, deubiquitinating enzyme involved in DNA repair and reassembly of the Golgi apparatus and the endoplasmic reticulum following mitosis. Necessary for VCP-mediated reassembly of Golgi stacks after mitosis. Plays a role in VCP-mediated formation of transitional endoplasmic reticulum (tER). Mediates dissociation of the ternary complex containing STX5A, NSFL1C and VCP. Also involved in DNA repair following phosphorylation by ATM or ATR: acts by catalyzing deubiquitination of SPRTN, thereby promoting SPRTN recruitment to chromatin and subsequent proteolytic cleavage of covalent DNA-protein cross-links (DPCs). Hydrolyzes 'Lys-11'- and 'Lys-48'-linked polyubiquitin chains. The protein is Deubiquitinating protein VCPIP1 of Rattus norvegicus (Rat).